The primary structure comprises 394 residues: Elongation factor Tu (394 aa).

Residues 10–204 (KPHVNIGTIG…AVDSWIPLPE (195 aa)) form the tr-type G domain. Positions 19–26 (GHVDHGKT) are G1. 19–26 (GHVDHGKT) contributes to the GTP binding site. T26 serves as a coordination point for Mg(2+). A G2 region spans residues 60–64 (GITIN). The tract at residues 81–84 (DCPG) is G3. GTP is bound by residues 81–85 (DCPGH) and 136–139 (NKCD). The interval 136-139 (NKCD) is G4. A G5 region spans residues 174-176 (SGL).

Belongs to the TRAFAC class translation factor GTPase superfamily. Classic translation factor GTPase family. EF-Tu/EF-1A subfamily. In terms of assembly, monomer.

The protein localises to the cytoplasm. The catalysed reaction is GTP + H2O = GDP + phosphate + H(+). Functionally, GTP hydrolase that promotes the GTP-dependent binding of aminoacyl-tRNA to the A-site of ribosomes during protein biosynthesis. The protein is Elongation factor Tu of Ureaplasma parvum serovar 3 (strain ATCC 27815 / 27 / NCTC 11736).